Reading from the N-terminus, the 103-residue chain is Large ribosomal subunit protein bL21 (103 aa).

The protein belongs to the bacterial ribosomal protein bL21 family. In terms of assembly, part of the 50S ribosomal subunit. Contacts protein L20.

Functionally, this protein binds to 23S rRNA in the presence of protein L20. This is Large ribosomal subunit protein bL21 from Borrelia garinii subsp. bavariensis (strain ATCC BAA-2496 / DSM 23469 / PBi) (Borreliella bavariensis).